The following is a 55-amino-acid chain: Large ribosomal subunit protein bL33A (55 aa).

The protein belongs to the bacterial ribosomal protein bL33 family.

The sequence is that of Large ribosomal subunit protein bL33A from Salinispora tropica (strain ATCC BAA-916 / DSM 44818 / JCM 13857 / NBRC 105044 / CNB-440).